We begin with the raw amino-acid sequence, 469 residues long: 6-phosphogluconate dehydrogenase, NADP(+)-dependent, decarboxylating (469 aa).

Residues glycine 10–glycine 15, asparagine 33–serine 35, valine 74–alanine 76, and asparagine 102 each bind NADP(+). Substrate contacts are provided by residues asparagine 102 and serine 128 to glycine 130. The active-site Proton acceptor is lysine 182. Substrate is bound at residue histidine 185–asparagine 186. Residue glutamate 189 is the Proton donor of the active site. The substrate site is built by tyrosine 190, lysine 260, arginine 287, arginine 446, and histidine 452.

This sequence belongs to the 6-phosphogluconate dehydrogenase family. Homodimer.

The catalysed reaction is 6-phospho-D-gluconate + NADP(+) = D-ribulose 5-phosphate + CO2 + NADPH. It participates in carbohydrate degradation; pentose phosphate pathway; D-ribulose 5-phosphate from D-glucose 6-phosphate (oxidative stage): step 3/3. Catalyzes the oxidative decarboxylation of 6-phosphogluconate to ribulose 5-phosphate and CO(2), with concomitant reduction of NADP to NADPH. Is the predominant 6-P-gluconate dehydrogenase isoenzyme in B.subtilis during growth on glucose and gluconate. This chain is 6-phosphogluconate dehydrogenase, NADP(+)-dependent, decarboxylating (gndA), found in Bacillus subtilis (strain 168).